The chain runs to 136 residues: Large ribosomal subunit protein eL27 (136 aa).

The KOW domain occupies 5–40 (MKPGKVVLVLAGRYSGRKAVIVKNIDDGTSDRPYSH). Residues K27 and K93 each carry the N6-acetyllysine modification.

Belongs to the eukaryotic ribosomal protein eL27 family. Component of the large ribosomal subunit. Interacts with RRP1B. Component of the large ribosomal subunit. Interacts with RRP1B. Interacts with DHX33.

The protein localises to the cytoplasm. It localises to the cytosol. Its subcellular location is the rough endoplasmic reticulum. Component of the large ribosomal subunit. Required for proper rRNA processing and maturation of 28S and 5.8S rRNAs. This is Large ribosomal subunit protein eL27 (RPL27) from Canis lupus familiaris (Dog).